Here is a 747-residue protein sequence, read N- to C-terminus: MRRSLAPSQLAKRKPEGRSCDDEDWQPGLVTPRKRKSSSETQIQECFLSPFRKPLSQLTNQPPCLDSSQHEAFIRSILSKPFKVPIPNYQGPLGSRALGLKRAGVRRALHDPLEKDALVLYEPPPLSAHDQLKLDKEKLPVHVVVDPILSKVLRPHQREGVKFLWECVTSRRIPGSHGCIMADEMGLGKTLQCITLMWTLLRQSPECKPEIDKAVVVSPSSLVKNWYNEVGKWLGGRIQPLAIDGGSKDEIDQKLEGFMNQRGARVSSPILIISYETFRLHVGVLQKGSVGLVICDEGHRLKNSENQTYQALDSLNTSRRVLISGTPIQNDLLEYFSLVHFVNSGILGTAHEFKKHFELPILKGRDAAASEADRQLGEERLRELTSIVNRCLIRRTSDILSKYLPVKIEQVVCCRLTPLQTELYKRFLRQAKPAEELLEGKMSVSSLSSITSLKKLCNHPALIYDKCVEEEDGFVGALDLFPPGYSSKALEPQLSGKMLVLDYILAVTRSRSSDKVVLVSNYTQTLDLFEKLCRARRYLYVRLDGTMSIKKRAKVVERFNSPSSPDFVFMLSSKAGGCGLNLIGANRLVMFDPDWNPANDEQAMARVWRDGQKKTCYIYRLLSAGTIEEKIFQRQSHKKALSSCVVDEEQDVERHFSLGELKELFILDEASLSDTHDRLHCRRCVNSRQIRPPPDGSDCTSDLAGWNHCTDKWGLRDEVLQAAWDAASTAITFVFHQRSHEEQRGLR.

A disordered region spans residues 1–41 (MRRSLAPSQLAKRKPEGRSCDDEDWQPGLVTPRKRKSSSET). A required for chromatin remodeling, strand pairing activities and coupling of ATPase activity region spans residues 2 to 9 (RRSLAPSQ). The residue at position 38 (Ser38) is a Phosphoserine. A Helicase ATP-binding domain is found at 170–345 (SRRIPGSHGC…FSLVHFVNSG (176 aa)). 183–190 (DEMGLGKT) contributes to the ATP binding site. Residues 296–299 (DEGH) carry the DEGH box motif. The Helicase C-terminal domain maps to 500-653 (VLDYILAVTR…CVVDEEQDVE (154 aa)). Lys515 carries the N6-acetyllysine modification. Phosphoserine; by NEK1 is present on Ser572.

Belongs to the SNF2/RAD54 helicase family. As to quaternary structure, homohexamer. Interacts (via N-terminus) with RAD51. Interacts with NAP1L1. Interacts with BRD9; this interaction orchestrates RAD51-RAD54 complex formation. Acetylated. Acetylation promotes interaction with BRD9, and subsequently with RAD54, which is essential for homologous recombination (HR). In terms of processing, phosphorylated. Phosphorylation at Ser-572 by NEK1 specifically in G2 phase allows efficient removal of RAD51 filaments from DNA.

It is found in the nucleus. The catalysed reaction is ATP + H2O = ADP + phosphate + H(+). Functionally, plays an essential role in homologous recombination (HR) which is a major pathway for repairing DNA double-strand breaks (DSBs), single-stranded DNA (ssDNA) gaps, and stalled or collapsed replication forks. Acts as a molecular motor during the homology search and guides RAD51 ssDNA along a donor dsDNA thereby changing the homology search from the diffusion-based mechanism to a motor-guided mechanism. Also plays an essential role in RAD51-mediated synaptic complex formation which consists of three strands encased in a protein filament formed once homology is recognized. Once DNA strand exchange occured, dissociates RAD51 from nucleoprotein filaments formed on dsDNA. This Homo sapiens (Human) protein is DNA repair and recombination protein RAD54-like (RAD54L).